Consider the following 65-residue polypeptide: Large ribosomal subunit protein uL29 (65 aa).

It belongs to the universal ribosomal protein uL29 family.

This is Large ribosomal subunit protein uL29 from Coxiella burnetii (strain CbuK_Q154) (Coxiella burnetii (strain Q154)).